The following is a 482-amino-acid chain: 2-succinylbenzoate--CoA ligase (482 aa).

This sequence belongs to the ATP-dependent AMP-binding enzyme family. MenE subfamily.

The catalysed reaction is 2-succinylbenzoate + ATP + CoA = 2-succinylbenzoyl-CoA + AMP + diphosphate. Its pathway is quinol/quinone metabolism; 1,4-dihydroxy-2-naphthoate biosynthesis; 1,4-dihydroxy-2-naphthoate from chorismate: step 5/7. It participates in quinol/quinone metabolism; menaquinone biosynthesis. Functionally, converts 2-succinylbenzoate (OSB) to 2-succinylbenzoyl-CoA (OSB-CoA). In Bacillus cereus (strain AH820), this protein is 2-succinylbenzoate--CoA ligase.